The sequence spans 490 residues: UDP-N-acetylmuramoyl-L-alanyl-D-glutamate--2,6-diaminopimelate ligase (490 aa).

UDP-N-acetyl-alpha-D-muramoyl-L-alanyl-D-glutamate is bound at residue Ser-31. Residue 109–115 (GTNGKTS) coordinates ATP. UDP-N-acetyl-alpha-D-muramoyl-L-alanyl-D-glutamate-binding positions include Asn-150, 151–152 (TT), Ser-178, and Arg-186. N6-carboxylysine is present on Lys-218. Meso-2,6-diaminopimelate contacts are provided by residues Arg-384, 408–411 (DNPR), Gly-458, and Glu-462. Positions 408–411 (DNPR) match the Meso-diaminopimelate recognition motif motif.

The protein belongs to the MurCDEF family. MurE subfamily. The cofactor is Mg(2+). In terms of processing, carboxylation is probably crucial for Mg(2+) binding and, consequently, for the gamma-phosphate positioning of ATP.

It localises to the cytoplasm. The catalysed reaction is UDP-N-acetyl-alpha-D-muramoyl-L-alanyl-D-glutamate + meso-2,6-diaminopimelate + ATP = UDP-N-acetyl-alpha-D-muramoyl-L-alanyl-gamma-D-glutamyl-meso-2,6-diaminopimelate + ADP + phosphate + H(+). Its pathway is cell wall biogenesis; peptidoglycan biosynthesis. Its function is as follows. Catalyzes the addition of meso-diaminopimelic acid to the nucleotide precursor UDP-N-acetylmuramoyl-L-alanyl-D-glutamate (UMAG) in the biosynthesis of bacterial cell-wall peptidoglycan. This Bacillus velezensis (strain DSM 23117 / BGSC 10A6 / LMG 26770 / FZB42) (Bacillus amyloliquefaciens subsp. plantarum) protein is UDP-N-acetylmuramoyl-L-alanyl-D-glutamate--2,6-diaminopimelate ligase.